The primary structure comprises 132 residues: Inactive D-aminoacyl-tRNA deacylase (132 aa).

It belongs to the DTD family.

A non-functional D-aminoacyl-tRNA deacylase. The chain is Inactive D-aminoacyl-tRNA deacylase from Bacillus subtilis (strain 168).